The following is a 100-amino-acid chain: Urease subunit gamma (100 aa).

Belongs to the urease gamma subunit family. In terms of assembly, heterotrimer of UreA (gamma), UreB (beta) and UreC (alpha) subunits. Three heterotrimers associate to form the active enzyme.

It is found in the cytoplasm. It carries out the reaction urea + 2 H2O + H(+) = hydrogencarbonate + 2 NH4(+). The protein operates within nitrogen metabolism; urea degradation; CO(2) and NH(3) from urea (urease route): step 1/1. The sequence is that of Urease subunit gamma from Blochmanniella floridana.